Here is a 551-residue protein sequence, read N- to C-terminus: FGGY carbohydrate kinase domain-containing protein (551 aa).

The protein belongs to the FGGY kinase family. As to expression, expressed in kidney, lung and small intestine and to a lower extent in liver and detected in cerebrospinal fluid (at protein level).

It carries out the reaction D-ribulose + ATP = D-ribulose 5-phosphate + ADP + H(+). Its pathway is carbohydrate metabolism; pentose and glucuronate interconversion. In terms of biological role, catalyzes ATP-dependent phosphorylation of D-ribulose at C-5 to form D-ribulose 5-phosphate. Postulated to function in a metabolite repair mechanism by preventing toxic accumulation of free D-ribulose formed by non-specific phosphatase activities. Alternatively, may play a role in regulating D-ribulose 5-phosphate recycling in the pentose phosphate pathway. Can phosphorylate ribitol with low efficiency. The polypeptide is FGGY carbohydrate kinase domain-containing protein (Homo sapiens (Human)).